The chain runs to 64 residues: DNA gyrase inhibitor YacG (64 aa).

Residues Cys9, Cys12, Cys28, and Cys32 each contribute to the Zn(2+) site.

This sequence belongs to the DNA gyrase inhibitor YacG family. Interacts with GyrB. The cofactor is Zn(2+).

In terms of biological role, inhibits all the catalytic activities of DNA gyrase by preventing its interaction with DNA. Acts by binding directly to the C-terminal domain of GyrB, which probably disrupts DNA binding by the gyrase. This is DNA gyrase inhibitor YacG from Enterobacter sp. (strain 638).